Consider the following 73-residue polypeptide: Small ribosomal subunit protein eS27 (73 aa).

Residues Cys-28, Cys-31, Cys-47, and Cys-50 each contribute to the Zn(2+) site. The segment at Cys-28–Cys-50 adopts a C4-type zinc-finger fold.

The protein belongs to the eukaryotic ribosomal protein eS27 family. In terms of assembly, part of the 30S ribosomal subunit. Requires Zn(2+) as cofactor.

The polypeptide is Small ribosomal subunit protein eS27 (Methanopyrus kandleri (strain AV19 / DSM 6324 / JCM 9639 / NBRC 100938)).